Here is a 354-residue protein sequence, read N- to C-terminus: Ribosomal RNA large subunit methyltransferase K (354 aa).

It belongs to the methyltransferase superfamily.

It is found in the cytoplasm. The catalysed reaction is guanosine(2069) in 23S rRNA + S-adenosyl-L-methionine = N(2)-methylguanosine(2069) in 23S rRNA + S-adenosyl-L-homocysteine + H(+). Specifically methylates the guanine in position 2069 (m7G2069) of 23S rRNA. This Neisseria meningitidis serogroup B (strain ATCC BAA-335 / MC58) protein is Ribosomal RNA large subunit methyltransferase K (rlmK).